The sequence spans 481 residues: Putative cytochrome P450 520B1 (481 aa).

Heme is bound at residue C427.

Belongs to the cytochrome P450 family. The cofactor is heme.

This chain is Putative cytochrome P450 520B1 (cyp520B1), found in Dictyostelium discoideum (Social amoeba).